The sequence spans 409 residues: Astacin-like metalloendopeptidase (409 aa).

An N-terminal signal peptide occupies residues 1 to 19 (MDLKMLLIFTAFLLPAVLG). Residues 20–86 (FPIQDNYENS…EGDIVPRRSR (67 aa)) constitute a propeptide that is removed on maturation. Over residues 30–42 (TATSESTQVTTEE) the composition is skewed to low complexity. The tract at residues 30–55 (TATSESTQVTTEESIYDSPSPTETDS) is disordered. Positions 87-285 (SAFNCRNCYW…AKINKLYNCS (199 aa)) constitute a Peptidase M12A domain. Cystine bridges form between C91-C94, C134-C284, C155-C175, C287-C313, and C339-C362. H183 lines the Zn(2+) pocket. E184 is a catalytic residue. Zn(2+)-binding residues include H187 and H193. In terms of domain architecture, CUB spans 287 to 399 (CSTIIDAAFG…SGFQATFTSA (113 aa)).

Requires Zn(2+) as cofactor.

The protein resides in the cytoplasm. It localises to the cell membrane. It is found in the cytoplasmic vesicle. The protein localises to the secretory vesicle. Its subcellular location is the cortical granule. Functionally, probable oocyte-specific oolemmal receptor involved in sperm and egg adhesion and fertilization. Protease which may play a role in the breaking down of the vitelline membrane (days 0-5) and possibly, in the digestion of the egg white (days 9-12). The polypeptide is Astacin-like metalloendopeptidase (Coturnix japonica (Japanese quail)).